Here is a 248-residue protein sequence, read N- to C-terminus: Adenylate kinase (248 aa).

An ATP-binding site is contributed by 37 to 42 (GAGKGT). An NMP region spans residues 57–86 (SPGNLLREEMNRNSPITAQIKDYVSKGQLV). Residues Arg-63, 84–86 (QLV), 111–114 (GFPR), and Gln-118 contribute to the AMP site. The tract at residues 149-181 (GRRFDPITGNTYHIIYDPPPPDIADRVVVRTDD) is LID. Arg-150 lines the ATP pocket. The AMP site is built by Arg-178 and Arg-189.

It belongs to the adenylate kinase family. As to quaternary structure, monomer.

It localises to the cytoplasm. It carries out the reaction AMP + ATP = 2 ADP. Catalyzes the reversible transfer of the terminal phosphate group between ATP and AMP. Plays an important role in cellular energy homeostasis and in adenine nucleotide metabolism. The polypeptide is Adenylate kinase (Giardia intestinalis (Giardia lamblia)).